Reading from the N-terminus, the 115-residue chain is Promotilin (115 aa).

A signal peptide spans 1 to 25; the sequence is MLSRKATAVLLAVHAAAMLASQTEA. The segment at 43 to 72 is disordered; the sequence is RYKGQKKSLSVQQRSEEVGPVDPTEPWEEK.

Belongs to the motilin family.

It localises to the secreted. Functionally, plays an important role in the regulation of interdigestive gastrointestinal motility and indirectly causes rhythmic contraction of duodenal and colonic smooth muscle. The protein is Promotilin (MLN) of Bos taurus (Bovine).